The chain runs to 278 residues: uncharacterized protein (278 aa).

A Response regulatory domain is found at 1 to 55 (MKIRERFSMVDLPVLIITAAIIGHDKYKAFHAGANDILQKPYHYSEFMARIQNLI).

This is an uncharacterized protein from Bacillus subtilis (strain 168).